A 377-amino-acid chain; its full sequence is Aspartate aminotransferase (377 aa).

G37, W123, and N173 together coordinate L-aspartate. K234 bears the N6-(pyridoxal phosphate)lysine mark. R353 contributes to the L-aspartate binding site.

Belongs to the class-I pyridoxal-phosphate-dependent aminotransferase family. In terms of assembly, homodimer. It depends on pyridoxal 5'-phosphate as a cofactor.

The protein resides in the cytoplasm. The catalysed reaction is L-aspartate + 2-oxoglutarate = oxaloacetate + L-glutamate. The chain is Aspartate aminotransferase (aspC) from Thermotoga maritima (strain ATCC 43589 / DSM 3109 / JCM 10099 / NBRC 100826 / MSB8).